The sequence spans 450 residues: Allergen Fus c 3 (450 aa).

4 disordered regions span residues 18–87, 99–148, 185–377, and 398–426; these read EPEM…SRAQ, DLHA…HLPP, SGHP…NLVE, and QIRH…RRVS. Residues 31–46 show a composition bias toward polar residues; it reads PHQQPISSPNRTSRNT. The span at 101 to 112 shows a compositional bias: low complexity; the sequence is HAPSHPSHLSHG. Residues 113-125 show a composition bias toward basic and acidic residues; it reads APHEQEHAHEIQR. Residues 272–286 are compositionally biased toward basic residues; the sequence is RPRKPARARRQKKEP. Residues 291 to 304 are compositionally biased toward polar residues; the sequence is DASQGARSSSTGGT. Residues 305–341 show a composition bias toward low complexity; the sequence is AHSVSDAASPSSTSHQSRASLTSKSASMTSAASTASS. Residues 356-377 show a composition bias toward basic and acidic residues; sequence TLDKPNDTAEDRRTRASHNLVE. A bHLH domain is found at 368-441; the sequence is RTRASHNLVE…EMARRHIEAL (74 aa).

The polypeptide is Allergen Fus c 3 (Fusarium culmorum).